The chain runs to 1207 residues: DNA-directed RNA polymerase subunit beta' (1207 aa).

4 residues coordinate Zn(2+): Cys-60, Cys-62, Cys-75, and Cys-78. Positions 450, 452, and 454 each coordinate Mg(2+). Zn(2+) contacts are provided by Cys-818, Cys-892, Cys-899, and Cys-902.

Belongs to the RNA polymerase beta' chain family. As to quaternary structure, the RNAP catalytic core consists of 2 alpha, 1 beta, 1 beta' and 1 omega subunit. When a sigma factor is associated with the core the holoenzyme is formed, which can initiate transcription. Mg(2+) is required as a cofactor. The cofactor is Zn(2+).

It carries out the reaction RNA(n) + a ribonucleoside 5'-triphosphate = RNA(n+1) + diphosphate. Functionally, DNA-dependent RNA polymerase catalyzes the transcription of DNA into RNA using the four ribonucleoside triphosphates as substrates. This chain is DNA-directed RNA polymerase subunit beta', found in Lactococcus lactis subsp. lactis (strain IL1403) (Streptococcus lactis).